The following is a 247-amino-acid chain: 1-(5-phosphoribosyl)-5-[(5-phosphoribosylamino)methylideneamino] imidazole-4-carboxamide isomerase (247 aa).

The Proton acceptor role is filled by Asp8. The active-site Proton donor is the Asp129.

This sequence belongs to the HisA/HisF family.

It is found in the cytoplasm. It catalyses the reaction 1-(5-phospho-beta-D-ribosyl)-5-[(5-phospho-beta-D-ribosylamino)methylideneamino]imidazole-4-carboxamide = 5-[(5-phospho-1-deoxy-D-ribulos-1-ylimino)methylamino]-1-(5-phospho-beta-D-ribosyl)imidazole-4-carboxamide. The protein operates within amino-acid biosynthesis; L-histidine biosynthesis; L-histidine from 5-phospho-alpha-D-ribose 1-diphosphate: step 4/9. In Bradyrhizobium sp. (strain BTAi1 / ATCC BAA-1182), this protein is 1-(5-phosphoribosyl)-5-[(5-phosphoribosylamino)methylideneamino] imidazole-4-carboxamide isomerase.